The following is a 162-amino-acid chain: Phosphopantetheine adenylyltransferase (162 aa).

Residue Ser9 participates in substrate binding. Residues 9-10 (SF) and His17 contribute to the ATP site. Substrate is bound by residues Lys41, Leu73, and Lys87. ATP is bound by residues 88–90 (GLR), Glu98, and 123–129 (CSFLSSS).

Belongs to the bacterial CoaD family. As to quaternary structure, homohexamer. Requires Mg(2+) as cofactor.

It is found in the cytoplasm. It catalyses the reaction (R)-4'-phosphopantetheine + ATP + H(+) = 3'-dephospho-CoA + diphosphate. It functions in the pathway cofactor biosynthesis; coenzyme A biosynthesis; CoA from (R)-pantothenate: step 4/5. In terms of biological role, reversibly transfers an adenylyl group from ATP to 4'-phosphopantetheine, yielding dephospho-CoA (dPCoA) and pyrophosphate. This is Phosphopantetheine adenylyltransferase from Natranaerobius thermophilus (strain ATCC BAA-1301 / DSM 18059 / JW/NM-WN-LF).